The following is a 175-amino-acid chain: MSKVKKNEEALSEVLVDVNRVTKVVKGGRRFAFSAYVVVGDKAGRVGAGHGKAKEVNEARGKAKQAAKKRMMKVPLYQNRTIHHDVVGKSGAAKVILRRAKAGTGVIAGGSMRAIFDSLGVHDIVAKSIGSTNVYAMISATFDALNKLASPKSIAIRRDKKVHEISIKSYIQVNE.

The S5 DRBM domain maps to 11-74; that stretch reads LSEVLVDVNR…QAAKKRMMKV (64 aa).

This sequence belongs to the universal ribosomal protein uS5 family. In terms of assembly, part of the 30S ribosomal subunit. Contacts proteins S4 and S8.

With S4 and S12 plays an important role in translational accuracy. In terms of biological role, located at the back of the 30S subunit body where it stabilizes the conformation of the head with respect to the body. The protein is Small ribosomal subunit protein uS5 of Rickettsia prowazekii (strain Madrid E).